A 651-amino-acid chain; its full sequence is Threonine--tRNA ligase (651 aa).

The TGS domain maps to 1–61 (MPTIQLPDGS…DKDVSLRIIT (61 aa)). The segment at 242–533 (DHRLLAKKMD…LLEESAGKLP (292 aa)) is catalytic. Residues Cys333, His384, and His510 each coordinate Zn(2+). The interval 631–651 (ISQRSRKSPAPSPLFPVGGES) is disordered.

This sequence belongs to the class-II aminoacyl-tRNA synthetase family. In terms of assembly, homodimer. The cofactor is Zn(2+).

The protein localises to the cytoplasm. It carries out the reaction tRNA(Thr) + L-threonine + ATP = L-threonyl-tRNA(Thr) + AMP + diphosphate + H(+). In terms of biological role, catalyzes the attachment of threonine to tRNA(Thr) in a two-step reaction: L-threonine is first activated by ATP to form Thr-AMP and then transferred to the acceptor end of tRNA(Thr). Also edits incorrectly charged L-seryl-tRNA(Thr). This chain is Threonine--tRNA ligase, found in Coxiella burnetii (strain RSA 493 / Nine Mile phase I).